The primary structure comprises 524 residues: Pentatricopeptide repeat-containing protein At1g02150 (524 aa).

PPR repeat units follow at residues 168–202, 203–237, 238–268, 274–304, 309–339, 344–378, and 379–413; these read DRRV…GYAL, HPLP…DIRL, DIYS…MKSD, NWTT…VEAR, NRIP…YKSV, PNLG…KSSY, and DPRI…GGKP.

Belongs to the PPR family. P subfamily.

The protein is Pentatricopeptide repeat-containing protein At1g02150 of Arabidopsis thaliana (Mouse-ear cress).